A 166-amino-acid polypeptide reads, in one-letter code: ATP synthase subunit b (166 aa).

A helical membrane pass occupies residues 27-47 (FFVVLLIFLIVLGVIAKWVVP). The tract at residues 124 to 143 (SADQQLSQQGSAAQSELQSS) is disordered.

It belongs to the ATPase B chain family. As to quaternary structure, F-type ATPases have 2 components, F(1) - the catalytic core - and F(0) - the membrane proton channel. F(1) has five subunits: alpha(3), beta(3), gamma(1), delta(1), epsilon(1). F(0) has three main subunits: a(1), b(2) and c(10-14). The alpha and beta chains form an alternating ring which encloses part of the gamma chain. F(1) is attached to F(0) by a central stalk formed by the gamma and epsilon chains, while a peripheral stalk is formed by the delta and b chains.

Its subcellular location is the cell membrane. F(1)F(0) ATP synthase produces ATP from ADP in the presence of a proton or sodium gradient. F-type ATPases consist of two structural domains, F(1) containing the extramembraneous catalytic core and F(0) containing the membrane proton channel, linked together by a central stalk and a peripheral stalk. During catalysis, ATP synthesis in the catalytic domain of F(1) is coupled via a rotary mechanism of the central stalk subunits to proton translocation. Functionally, component of the F(0) channel, it forms part of the peripheral stalk, linking F(1) to F(0). In Mycolicibacterium vanbaalenii (strain DSM 7251 / JCM 13017 / BCRC 16820 / KCTC 9966 / NRRL B-24157 / PYR-1) (Mycobacterium vanbaalenii), this protein is ATP synthase subunit b.